The following is a 338-amino-acid chain: RNA 3'-terminal phosphate cyclase (338 aa).

Residues Q103 and 283 to 287 (YLADQ) each bind ATP. H308 acts as the Tele-AMP-histidine intermediate in catalysis.

It belongs to the RNA 3'-terminal cyclase family. Type 1 subfamily.

The protein resides in the cytoplasm. The enzyme catalyses a 3'-end 3'-phospho-ribonucleotide-RNA + ATP = a 3'-end 2',3'-cyclophospho-ribonucleotide-RNA + AMP + diphosphate. In terms of biological role, catalyzes the conversion of 3'-phosphate to a 2',3'-cyclic phosphodiester at the end of RNA. The mechanism of action of the enzyme occurs in 3 steps: (A) adenylation of the enzyme by ATP; (B) transfer of adenylate to an RNA-N3'P to produce RNA-N3'PP5'A; (C) and attack of the adjacent 2'-hydroxyl on the 3'-phosphorus in the diester linkage to produce the cyclic end product. The biological role of this enzyme is unknown but it is likely to function in some aspects of cellular RNA processing. The polypeptide is RNA 3'-terminal phosphate cyclase (Escherichia coli O17:K52:H18 (strain UMN026 / ExPEC)).